Here is a 319-residue protein sequence, read N- to C-terminus: Polyprenyl transferase macG (319 aa).

The next 9 membrane-spanning stretches (helical) occupy residues 28–45 (AWLC…AAGM), 48–68 (VSLE…SVTA), 106–126 (AVVA…GTLG), 127–147 (PAVM…PFMK), 152–172 (FPQV…WVGI), 182–202 (ALPL…FYAT), 224–244 (VQIL…VTAL), 249–269 (SLIF…WHIL), and 289–309 (LGLY…VYDI).

Belongs to the UbiA prenyltransferase family. Mg(2+) serves as cofactor.

The protein resides in the membrane. It participates in secondary metabolite biosynthesis; terpenoid biosynthesis. In terms of biological role, polyprenyl transferase; part of the gene cluster that mediates the biosynthesis of macrophorins, isoprenoid epoxycyclohexenones containing cyclized drimane moieties. The first step of the pathway is the synthesis of 6-methylsalicylic acid (6-MSA) by the polyketide synthase macA. 6-MSA is then converted to m-cresol by the decarboxylase macB. The cytochrome P450 monooxygenase macC then catalyzes the oxidation of m-cresol to toluquinol. Epoxidation of toluquinol is then performed by the short chain dehydrogenase macD, with the help of macE, and a further prenylation by macG leads to 7-deacetoxyyanuthone A. The next step is the hydroxylation of C-22 of 7-deacetoxyyanuthone A by the cytochrome P450 monooxygenase macH to yield 22-deacetylyanuthone A. O-Mevalon transferase macI then attaches mevalon to the hydroxyl group of 22-deacetylyanuthone A to produce yanuthone E. The terpene cyclase macJ catalyzes the cyclization of 22-deacetylyanuthone A to macrophorin A. MacJ is also able to catalyze cyclization of yanuthone E and 7-deacetoxyyanuthone A to their corresponding macrophorins. The macJ products can be further modified by macH and macJ, as well as by the FAD-dependent monooxygenase macF, to produce additional macrophorins, including 4'-oxomacrophorin A, 4'-oxomacrophorin D and 4'-oxomacrophorin E. This Penicillium terrestre protein is Polyprenyl transferase macG.